The primary structure comprises 207 residues: Uracil phosphoribosyltransferase (207 aa).

5-phospho-alpha-D-ribose 1-diphosphate contacts are provided by residues Arg-77, Arg-102, and 129-137 (DPMLATGGS). Residues Ile-192 and 197–199 (GDA) each bind uracil. Asp-198 provides a ligand contact to 5-phospho-alpha-D-ribose 1-diphosphate.

The protein belongs to the UPRTase family. It depends on Mg(2+) as a cofactor.

The enzyme catalyses UMP + diphosphate = 5-phospho-alpha-D-ribose 1-diphosphate + uracil. It functions in the pathway pyrimidine metabolism; UMP biosynthesis via salvage pathway; UMP from uracil: step 1/1. Allosterically activated by GTP. Its function is as follows. Catalyzes the conversion of uracil and 5-phospho-alpha-D-ribose 1-diphosphate (PRPP) to UMP and diphosphate. This chain is Uracil phosphoribosyltransferase, found in Ureaplasma urealyticum serovar 10 (strain ATCC 33699 / Western).